We begin with the raw amino-acid sequence, 65 residues long: Alpha-conotoxin Mr1.1 (65 aa).

A signal peptide spans Met1–Ser21. Residues Phe22–Lys48 constitute a propeptide that is removed on maturation. 2 disulfides stabilise this stretch: Cys50–Cys56 and Cys51–Cys64. A ser-Xaa-Pro motif, crucial for potent interaction with nAChR region spans residues Ser52–Pro54. Cysteine amide is present on Cys64.

It belongs to the conotoxin A superfamily. As to expression, expressed by the venom duct.

Its subcellular location is the secreted. Its function is as follows. Alpha-conotoxins act on postsynaptic membranes, they bind to the nicotinic acetylcholine receptors (nAChR) and thus inhibit them. This toxin potently and reversibly inhibits alpha-9-alpha-10/CHRNA9-CHRNA10 (IC(50)=92 nM (human) and IC(50)=8.3 nM (rat)) and human alpha3-beta-2/CHRNA3-CHRNB2 nAChR (IC(50)=218.9 nM). Also moderately inhibits human alpha-3-beta-4/CHRNA3-CHRNB4 (60% inhibition at 1 uM), rat alpha-7/CHRNA7 (65% inhibition at 1 uM) and rat alpha-3-beta-2/CHRNA3-CHRNB2 nAChR (50-70% inhibition at 10 uM). In two rat pain models, this toxin shows analgesic effect. The protein is Alpha-conotoxin Mr1.1 of Conus marmoreus (Marble cone).